The following is a 432-amino-acid chain: 7-dehydrocholesterol reductase (432 aa).

Helical transmembrane passes span 12-34, 64-86, 107-126, 136-155, 195-212, 227-249, 261-283, 287-309, and 371-393; these read YASM…YTMV, LIAW…LLPG, LAAY…FGIF, GEIF…LLYI, FTNC…AVTY, MLVN…AGYW, FYIC…MYLV, VELG…YINY, and SAFF…VIFL.

This sequence belongs to the ERG4/ERG24 family.

The protein resides in the endoplasmic reticulum membrane. It catalyses the reaction cholesterol + NADP(+) = 7-dehydrocholesterol + NADPH + H(+). The protein operates within lipid metabolism; steroid biosynthesis. Production of cholesterol by reduction of C7-C8 double bond of 7-dehydrocholesterol (7-DHC). Lesions in the gene coding for the enzyme cause dwarfism. This Arabidopsis thaliana (Mouse-ear cress) protein is 7-dehydrocholesterol reductase (DWF5).